The sequence spans 490 residues: 5'-3' exonuclease PLD3 (490 aa).

Residues 1 to 38 (MKPKLMYQELKVPAEEPANELPMNEIEAWKAAEKKARW) lie on the Cytoplasmic side of the membrane. Residues 39–59 (VLLVLILAVVGFGALMTQLFL) traverse the membrane as a helical; Signal-anchor for type II membrane protein segment. Over 60–490 (WEYGDLHLFG…DSVGNACRLL (431 aa)) the chain is Lumenal. 2 disulfide bridges follow: C77-C239 and C81-C237. N-linked (GlcNAc...) asparagine glycans are attached at residues N97 and N132. The PLD phosphodiesterase 1 domain occupies 196 to 223 (THGVLHTKFWVVDQTHFYLGSANMDWRS). Active-site residues include H201, K203, and D208. Catalysis depends on H201, which acts as the Proton donor. The phosphate site is built by H201 and K203. Residue N218 coordinates phosphate. N236, N284, and N387 each carry an N-linked (GlcNAc...) asparagine glycan. A disulfide bond links C366 and C487. The PLD phosphodiesterase 2 domain maps to 411–437 (YARVNHNKYMVTERATYIGTSNWSGNY). Residue H416 participates in phosphate binding. Catalysis depends on H416, which acts as the Nucleophile. A Mg(2+)-binding site is contributed by F438.

It belongs to the phospholipase D family. Homodimer. Interacts with APP. N-glycosylated. Post-translationally, proteolytically processed to a soluble form that is stable within endosomes and lysosomes. During transport through the secretory pathway becomes proteolysed by cysteine proteases, thereby releasing a stable soluble lysosomal lumenal polypeptide, whereas the transmembrane-bound fragment is rapidly degraded. Its transport route to lysosomes involves ubiquitination and the ESCRT complex. In terms of processing, ubiquitinated. Ubiquitination mediates sorting into lysosomes.

The protein resides in the endoplasmic reticulum membrane. It is found in the lysosome lumen. The protein localises to the early endosome membrane. Its subcellular location is the late endosome membrane. It localises to the golgi apparatus membrane. The protein resides in the endosome membrane. It carries out the reaction Exonucleolytic cleavage in the 5'- to 3'-direction to yield nucleoside 3'-phosphates.. It catalyses the reaction a 5'-end 5'-dephospho-ribonucleotidyl-ribonucleotide-RNA + H2O = a ribonucleoside 3'-phosphate + a 5'-end dephospho-ribonucleoside-RNA + H(+). The enzyme catalyses a ribonucleoside 3'-phosphate-2'-3'-cyclophospho-GMP + H2O = a ribonucleoside 3'-phosphate + 2',3'-cyclophospho-GMP + H(+). The catalysed reaction is a 5'-end 5'-dephospho-2'-deoxyribonucleotidyl-2'-deoxyribonucleotide in single-stranded DNA + H2O = a 5'-end dephospho-2'-deoxyribonucleoside in single-stranded DNA + a 2'-deoxyribonucleoside 3'-phosphate + H(+). It carries out the reaction a 5'-end 5'-phospho-2'-deoxyribonucleotide in single-stranded DNA + H2O = a 5'-end 5'-dephospho-2'-deoxyribonucleotide in single-stranded DNA + phosphate. It catalyses the reaction a 3-lyso-sn-glycero-1-phospho-(3'-acyl-1'-sn-glycerol) + a 1-acyl-sn-glycerol = a 3-acyl-sn-glycero-1-phospho-(3'-acyl-1'-sn-glycerol) + glycerol. The enzyme catalyses 3-lyso-sn-glycero-1-phospho-(3'-(9Z-octadecenoyl)-1'-sn-glycerol) + 1-(9Z-octadecenoyl)-sn-glycerol = 3-(9Z-octadecenoyl)-sn-glycero-1-phospho-(3'-(9Z-octadecenoyl)-1'-sn-glycerol) + glycerol. Its function is as follows. 5'-&gt;3' exonuclease that hydrolyzes the phosphodiester bond of single-stranded DNA (ssDNA) and RNA molecules to form nucleoside 3'-monophosphates and 5'-end 5'-hydroxy deoxyribonucleotide/ribonucleotide fragments. Partially redundant with PLD4, can cleave all four nucleotides displaying higher efficiency for ssDNA and RNA fragments initiated with uridine and guanosine residues and lower efficiency for cytidine-initiated substrates. As a result, it does not always degrade polynucleotides to the single nucleotide level, it can stall at specific sites sparing certain fragments from exonucleolytic degradation. Processes self and pathogenic ssDNA and RNA molecules that reach the endolysosomal compartment via phagocytosis or autophagy and may serve as 'danger' signals for recognition by innate immune receptors such as toll-like receptors (TLRs). Degrades mitochondrial CpG-rich ssDNA fragments to prevent TLR9 activation and autoinflammatory response, but it can cleave viral RNA to generate ligands for TLR7 activation and initiate antiviral immune responses. In plasmacytoid dendritic cells, it cooperates with endonuclease RNASET2 to release 2',3'-cyclic guanosine monophosphate (2',3'-cGMP), a potent stimulatory ligand for TLR7. Produces 2',3'-cGMPs and cytidine-rich RNA fragments that occupy TLR7 ligand-binding pockets and trigger a signaling-competent state. Can exert polynucleotide phosphatase activity toward 5'-phosphorylated ssDNA substrates although at a slow rate. Transphosphatidylase that catalyzes the exchange with R to S stereo-inversion of the glycerol moiety between (S,R)-lysophosphatidylglycerol (LPG) and monoacylglycerol (MAG) substrates to yield (S,S)-bis(monoacylglycero)phosphate (BMP). Can synthesize a variety of (S,S)-BMPs representing the main phospholipid constituent of lysosomal intralumenal vesicle (ILV) membranes that bind acid hydrolases for lipid degradation. Regulates the homeostasis and interorganellar communication of the endolysosomal system with an overall impact on cellular removal of dysfunctional organelles via autophagy as well as proper protein and lipid turnover. May play a role in myotube formation in response to ER stress. This Pongo abelii (Sumatran orangutan) protein is 5'-3' exonuclease PLD3 (PLD3).